A 180-amino-acid chain; its full sequence is Cuticle protein 3 (180 aa).

The signal sequence occupies residues 1–16 (MMKLIVLAAFIGVCAG). Residues 58–121 (EQGFRYAYET…PQGAHFPTPP (64 aa)) form the Chitin-binding type R&amp;R domain.

This chain is Cuticle protein 3, found in Lonomia obliqua (Moth).